A 371-amino-acid polypeptide reads, in one-letter code: Conglutinin (371 aa).

Positions 1–20 are cleaved as a signal peptide; sequence MLLLPLSVLLLLTQPWRSLG. Residues 46–216 form the Collagen-like domain; it reads GLPGHDGQDG…TGAKGESGLA (171 aa). A disordered region spans residues 47-215; sequence LPGHDGQDGR…ETGAKGESGL (169 aa). Basic and acidic residues predominate over residues 51-65; that stretch reads DGQDGRECPHGEKGD. K63 is subject to 5-hydroxylysine. Residues 71–83 are compositionally biased toward low complexity; sequence PAGRAGRPGWVGP. A 4-hydroxyproline modification is found at P78. K87 is modified (5-hydroxylysine). P96 is subject to 4-hydroxyproline. K99 carries the post-translational modification 5-hydroxylysine. A 4-hydroxyproline mark is found at P108, P111, P129, and P132. 5-hydroxylysine occurs at positions 135 and 141. A compositionally biased stretch (gly residues) spans 139–148; that stretch reads GPKGGVGAPG. P147 and P153 each carry 4-hydroxyproline. K159 and K162 each carry 5-hydroxylysine. 4-hydroxyproline occurs at positions 171 and 195. The residue at position 198 (K198) is a 5-hydroxylysine. The Cell attachment site motif lies at 201 to 203; it reads RGD. In terms of domain architecture, C-type lectin spans 273–371; sequence QLCREAKGQL…SKQLLVICEF (99 aa). Disulfide bonds link C275/C369 and C347/C361. N337 is a glycosylation site (N-linked (GlcNAc...) asparagine).

This sequence belongs to the SFTPD family. Oligomeric complex of 4 set of homotrimers. In terms of processing, the hydroxylysines may be O-glycosylated.

Functionally, calcium-dependent lectin-like protein which binds to a yeast cell wall extract and immune complexes through the complement component (C3bi). It is capable of binding non-reducing terminal N-acetylglucosamine, mannose, and fucose residues. The sequence is that of Conglutinin (CGN1) from Bos taurus (Bovine).